We begin with the raw amino-acid sequence, 323 residues long: Sphingolipid delta(4)-desaturase/C4-monooxygenase DES2 (323 aa).

The N-myristoyl glycine moiety is linked to residue Gly2. 2 helical membrane passes run 45-65 (WTVTAMVLAQLLACWLAQGLA) and 68-88 (WLFFWAYAFGGCVNHSLTLAI). The Histidine box-1 signature appears at 89-93 (HDISH). The required for C4-hydroxylase activity stretch occupies residues 95–99 (TAFGT). The short motif at 128–132 (HVDHH) is the Histidine box-2 element. Residues 209 to 231 (MVYLLASSLLGLGLHPISGHFVA) traverse the membrane as a helical segment. A Histidine box-3 motif is present at residues 259–263 (HMEHH).

Belongs to the fatty acid desaturase type 1 family. DEGS subfamily.

The protein resides in the endoplasmic reticulum membrane. It catalyses the reaction a dihydroceramide + 2 Fe(II)-[cytochrome b5] + O2 + 2 H(+) = a phytoceramide + 2 Fe(III)-[cytochrome b5] + H2O. The catalysed reaction is an N-acylsphinganine + 2 Fe(II)-[cytochrome b5] + O2 + 2 H(+) = an N-acylsphing-4-enine + 2 Fe(III)-[cytochrome b5] + 2 H2O. The enzyme catalyses N-octanoylsphinganine + 2 Fe(II)-[cytochrome b5] + O2 + 2 H(+) = N-octanoyl-4-hydroxysphinganine + 2 Fe(III)-[cytochrome b5] + H2O. It carries out the reaction an N-acylsphinganine + 2 Fe(II)-[cytochrome b5] + O2 + 2 H(+) = an N-acyl-(4R)-4-hydroxysphinganine + 2 Fe(III)-[cytochrome b5] + H2O. Its pathway is membrane lipid metabolism; sphingolipid biosynthesis. In terms of biological role, bifunctional enzyme which acts both as a sphingolipid delta(4)-desaturase and a sphingolipid C4-monooxygenase. The protein is Sphingolipid delta(4)-desaturase/C4-monooxygenase DES2 of Bos taurus (Bovine).